The chain runs to 324 residues: uncharacterized protein (324 aa).

An HTH lysR-type domain is found at 6 to 63 (LKYRELKIISVIAASENISHAATVLGIAQANVSKYLADFESKVGLKVFDRTTRQLMLT). The segment at residues 23 to 42 (ISHAATVLGIAQANVSKYLA) is a DNA-binding region (H-T-H motif).

Belongs to the LysR transcriptional regulatory family.

This is an uncharacterized protein from Escherichia coli (strain K12).